Consider the following 377-residue polypeptide: Palmitoyltransferase ZDHHC16 (377 aa).

Residues 1-77 (MRGQRSLLLG…VYWLVDNVIR (77 aa)) lie on the Cytoplasmic side of the membrane. The helical transmembrane segment at 78-98 (WFGVVFVVLVIVLTGSIVAIA) threads the bilayer. The Lumenal portion of the chain corresponds to 99–116 (YLCVLPLILRTYSVPRLC). The chain crosses the membrane as a helical span at residues 117–137 (WHFFYSHWNLILIVFHYYQAI). Over 138–198 (TTPPGYPPQG…NNCVGHYNHR (61 aa)) the chain is Cytoplasmic. The DHHC domain maps to 155–205 (SICKKCIYPKPARTHHCSICNRCVLKMDHHCPWLNNCVGHYNHRYFFSFCF). Cysteine 185 (S-palmitoyl cysteine intermediate) is an active-site residue. A helical membrane pass occupies residues 199–219 (YFFSFCFFMTLGCVYCSYGSW). Residues 220 to 266 (DLFREAYAAIEKMKQLDKNKLQAVANQTYHQTPPPTFSFRERMTHKS) lie on the Lumenal side of the membrane. A helical membrane pass occupies residues 267–287 (LVYLWFLCSSVALALGALTVW). Topologically, residues 288 to 377 (HAVLISRGET…TAHSASVMAV (90 aa)) are cytoplasmic.

It belongs to the DHHC palmitoyltransferase family. Interacts with ABL1. Interacts with COPS5/JAB1. As to expression, widely expressed.

The protein resides in the endoplasmic reticulum membrane. It catalyses the reaction L-cysteinyl-[protein] + hexadecanoyl-CoA = S-hexadecanoyl-L-cysteinyl-[protein] + CoA. Its function is as follows. Palmitoyl acyltransferase that mediates palmitoylation of proteins such as PLN and ZDHHC6. Required during embryonic heart development and cardiac function, possibly by mediating palmitoylation of PLN, thereby affecting PLN phosphorylation and homooligomerization. Also required for eye development. Palmitoylates ZDHHC6, affecting the quaternary assembly of ZDHHC6, its localization, stability and function. May play a role in DNA damage response. May be involved in apoptosis regulation. Involved in the proliferation of neural stem cells by regulating the FGF/ERK pathway. In Homo sapiens (Human), this protein is Palmitoyltransferase ZDHHC16.